A 305-amino-acid polypeptide reads, in one-letter code: tRNA pseudouridine synthase B (305 aa).

Asp-41 functions as the Nucleophile in the catalytic mechanism.

The protein belongs to the pseudouridine synthase TruB family. Type 1 subfamily.

The catalysed reaction is uridine(55) in tRNA = pseudouridine(55) in tRNA. Its function is as follows. Responsible for synthesis of pseudouridine from uracil-55 in the psi GC loop of transfer RNAs. The chain is tRNA pseudouridine synthase B from Prochlorococcus marinus (strain MIT 9515).